Reading from the N-terminus, the 222-residue chain is Histidinol-phosphatase (222 aa).

The active-site Nucleophile is Asp8. Mg(2+)-binding residues include Asp8, Asp10, and Asp184. Residue Asp10 is the Proton donor of the active site.

Belongs to the HAD-like hydrolase superfamily. SerB family. Mg(2+) serves as cofactor.

It catalyses the reaction L-histidinol phosphate + H2O = L-histidinol + phosphate. It participates in amino-acid biosynthesis; L-histidine biosynthesis; L-histidine from 5-phospho-alpha-D-ribose 1-diphosphate: step 8/9. In terms of biological role, catalyzes the dephosphorylation of histidinol-phosphate to histidinol, the direct precursor of histidine. The protein is Histidinol-phosphatase of Neisseria meningitidis serogroup C (strain 8013).